Reading from the N-terminus, the 556-residue chain is Cholesterol oxidase (556 aa).

Positions 18, 37, 88, 93, and 235 each coordinate FAD. Residue His471 is the Proton acceptor of the active site. Gly504 contacts FAD.

This sequence belongs to the GMC oxidoreductase family. Requires FAD as cofactor.

The enzyme catalyses cholesterol + O2 = cholest-5-en-3-one + H2O2. It carries out the reaction cholest-5-en-3-one = cholest-4-en-3-one. The protein operates within steroid metabolism; cholesterol degradation. In terms of biological role, bifunctional enzyme that catalyzes the oxidation and isomerization of cholesterol to cholestenone (cholest-4-en-3-one), an initial step in the cholesterol degradation process. The polypeptide is Cholesterol oxidase (Acinetobacter baumannii).